A 443-amino-acid polypeptide reads, in one-letter code: Trimethylamine monooxygenase (443 aa).

FAD is bound by residues Asp-37, Gln-39, Leu-45, and Trp-46. 2 residues coordinate NADP(+): Trp-70 and Asn-72. Asn-72 and Val-125 together coordinate FAD. 5 residues coordinate NADP(+): Tyr-170, Ser-202, Ser-203, Ser-205, and Arg-226. Residues Gln-315 and Thr-318 each coordinate FAD. Residue Arg-409 participates in NADP(+) binding.

The protein belongs to the FMO family. FAD serves as cofactor.

It catalyses the reaction trimethylamine + NADPH + O2 = trimethylamine N-oxide + NADP(+) + H2O. Catalyzes the oxidation of trimethylamine (TMA) to produce trimethylamine N-oxide (TMAO). In vitro, has a broad substrate specificity, oxidizing many nitrogen- and sulfur-containing compounds, including dimethylamine (DMA), dimethylsulfide (DMS) and dimethylsulfoxide (DMSO). The polypeptide is Trimethylamine monooxygenase (Pelagibacter ubique (strain HTCC1002)).